Consider the following 244-residue polypeptide: Eukaryotic translation initiation factor 6 (244 aa).

A phosphoserine; by CK1 mark is found at serine 174 and serine 175.

It belongs to the eIF-6 family. In terms of assembly, monomer. Associates with the 60S ribosomal subunit. Phosphorylation at Ser-174 and Ser-175 promotes nuclear export.

The protein localises to the cytoplasm. It is found in the nucleus. Its subcellular location is the nucleolus. Its function is as follows. Binds to the 60S ribosomal subunit and prevents its association with the 40S ribosomal subunit to form the 80S initiation complex in the cytoplasm. Is also involved in ribosome biogenesis. Associates with pre-60S subunits in the nucleus and is involved in its nuclear export. This chain is Eukaryotic translation initiation factor 6 (tif6), found in Schizosaccharomyces pombe (strain 972 / ATCC 24843) (Fission yeast).